Consider the following 170-residue polypeptide: MIIERLVGNLRDLNPLDFNVDHVDLEWFETRKKIARFKTRQGKDIAIRLKDAPKLGLSQGDILFKEEKEIIAVNILDSEVIHIQAKSVAEVAKICYEIGNRHAALYYGESQFEFKTPFEKPTLALLEKLGVQNRVLSSKLDSKERLTVSMPHSEPNFKVSLASDFKVVVK.

The protein belongs to the UreE family.

Its subcellular location is the cytoplasm. Functionally, involved in urease metallocenter assembly. Binds nickel. Probably functions as a nickel donor during metallocenter assembly. This is Urease accessory protein UreE from Helicobacter pylori (strain J99 / ATCC 700824) (Campylobacter pylori J99).